Reading from the N-terminus, the 143-residue chain is MKFLIVLAVAVACASADVSHIAKSDEYAAPVVKSSYDITPEGHFQFNYETGNGIYAQAEGAVKNVNSEYPAIEVKGAYKYTSPDGQPIDLAYVADENGYQPQGSHLPTPHPIPEAIARALAYIEAHPPSPSVVERKVVANLLG.

Residues 1-16 form the signal peptide; it reads MKFLIVLAVAVACASA. Positions 41–110 constitute a Chitin-binding type R&amp;R domain; it reads EGHFQFNYET…PQGSHLPTPH (70 aa).

In terms of biological role, component of the cuticle of the larva of Bombyx mori. This is Larval cuticle protein LCP-17 (LCP17) from Bombyx mori (Silk moth).